We begin with the raw amino-acid sequence, 32 residues long: GKSSSRPLGDATLGDLDFDIEVTQDYWDDLAR.

One can recognise a GH18 domain in the interval 1–32 (GKSSSRPLGDATLGDLDFDIEVTQDYWDDLAR). The Proton donor role is filled by Glu-21.

The protein belongs to the glycosyl hydrolase 18 family. Chitinase class II subfamily.

The enzyme catalyses Hydrolysis of terminal non-reducing N-acetyl-D-hexosamine residues in N-acetyl-beta-D-hexosaminides.. With respect to regulation, activity is decreased by HgCl(2) and maltose. Activity is stimulated by Na(2)SeO(4), BaCl(2), MgCl(2), chondroitin 6-sulfate and phenylmethylsulfonyl fluoride. Its function is as follows. Preferentially hydrolyzes pNP-GlcNAc, hydrolyzes pNP-GalNAc to a lesser extent. In Palythoa caribaeorum (White encrusting zoanthid coral), this protein is Beta-hexosaminidase.